The sequence spans 95 residues: Cell division topological specificity factor (95 aa).

It belongs to the MinE family.

Functionally, prevents the cell division inhibition by proteins MinC and MinD at internal division sites while permitting inhibition at polar sites. This ensures cell division at the proper site by restricting the formation of a division septum at the midpoint of the long axis of the cell. This Methylorubrum extorquens (strain CM4 / NCIMB 13688) (Methylobacterium extorquens) protein is Cell division topological specificity factor.